Reading from the N-terminus, the 233-residue chain is Aspartate/glutamate leucyltransferase (233 aa).

This sequence belongs to the R-transferase family. Bpt subfamily.

Its subcellular location is the cytoplasm. The enzyme catalyses N-terminal L-glutamyl-[protein] + L-leucyl-tRNA(Leu) = N-terminal L-leucyl-L-glutamyl-[protein] + tRNA(Leu) + H(+). It catalyses the reaction N-terminal L-aspartyl-[protein] + L-leucyl-tRNA(Leu) = N-terminal L-leucyl-L-aspartyl-[protein] + tRNA(Leu) + H(+). Functionally, functions in the N-end rule pathway of protein degradation where it conjugates Leu from its aminoacyl-tRNA to the N-termini of proteins containing an N-terminal aspartate or glutamate. This is Aspartate/glutamate leucyltransferase from Vibrio parahaemolyticus serotype O3:K6 (strain RIMD 2210633).